A 171-amino-acid chain; its full sequence is Large ribosomal subunit protein bL9 (171 aa).

It belongs to the bacterial ribosomal protein bL9 family.

Its function is as follows. Binds to the 23S rRNA. The protein is Large ribosomal subunit protein bL9 of Rickettsia peacockii (strain Rustic).